The chain runs to 97 residues: Mapk-regulated corepressor-interacting protein 1 (97 aa).

The tract at residues 1–30 (MTSSPVSRVVYNGKRTSSPRSPPSSSEIFT) is disordered. Residues serine 21 and serine 24 each carry the phosphoserine modification. The residue at position 30 (threonine 30) is a Phosphothreonine. A Phosphotyrosine modification is found at tyrosine 41. Lysine 79 carries the post-translational modification N6-acetyllysine. A PXDLS motif motif is present at residues 80 to 84 (PIDLS).

It belongs to the MCRIP family. As to quaternary structure, interacts (unphosphorylated form, via the PXDLS motif) with CTBP1, competitively inhibiting CTBP-ZEB1 interaction. Interacts with CTBP2. Interacts with MCRIP2. Interacts with DDX6. In terms of processing, phosphorylation by MAPK3/1 (ERK1/2) regulates MCRIP1 binding to CTBP(s).

It is found in the nucleus. Its subcellular location is the cytoplasm. The protein localises to the stress granule. In terms of biological role, the phosphorylation status of MCRIP1 functions as a molecular switch to regulate epithelial-mesenchymal transition. Unphosphorylated MCRIP1 binds to and inhibits the transcriptional corepressor CTBP(s). When phosphorylated by MAPK/ERK, MCRIP1 releases CTBP(s) resulting in transcriptional silencing of the E-cadherin gene and induction of epithelial-mesenchymal transition. The polypeptide is Mapk-regulated corepressor-interacting protein 1 (Homo sapiens (Human)).